Consider the following 425-residue polypeptide: Histidine--tRNA ligase (425 aa).

Belongs to the class-II aminoacyl-tRNA synthetase family. In terms of assembly, homodimer.

The protein resides in the cytoplasm. The enzyme catalyses tRNA(His) + L-histidine + ATP = L-histidyl-tRNA(His) + AMP + diphosphate + H(+). In Aeromonas salmonicida (strain A449), this protein is Histidine--tRNA ligase.